The primary structure comprises 293 residues: Probable E3 ubiquitin-protein ligase RNF144A-A (293 aa).

Positions 16–237 (PLVSCKLCLG…YDKGPCRNKL (222 aa)) are TRIAD supradomain. Residues Cys-20, Cys-23, Cys-43, Cys-46, Cys-111, Cys-116, Cys-135, Cys-138, Cys-143, Cys-146, His-151, Cys-156, Cys-186, and Cys-189 each coordinate Zn(2+). The segment at 20 to 70 (CKLCLGEFPLEQMTTITQCQCVFCTMCLKQYVELLIKEGFETAISCPDSAC) adopts an RING-type 1 zinc-finger fold. Residues 91–156 (QRYRKLQFEK…KASWHPDQDC (66 aa)) form an IBR-type zinc finger. The RING-type 2; atypical zinc-finger motif lies at 186–215 (CPKCKVYIERDEGCAQMMCKNCKHAFCWYC). Cys-199 is a catalytic residue. Residues Cys-204, Cys-207, Cys-212, Cys-215, His-227, and Cys-233 each contribute to the Zn(2+) site. The helical transmembrane segment at 251 to 271 (VVGIFAGFGLLLLVASPFLLL) threads the bilayer.

It belongs to the RBR family. RNF144 subfamily.

The protein resides in the membrane. It carries out the reaction [E2 ubiquitin-conjugating enzyme]-S-ubiquitinyl-L-cysteine + [acceptor protein]-L-lysine = [E2 ubiquitin-conjugating enzyme]-L-cysteine + [acceptor protein]-N(6)-ubiquitinyl-L-lysine.. The protein operates within protein modification; protein ubiquitination. Functionally, E3 ubiquitin-protein ligase which accepts ubiquitin from E2 ubiquitin-conjugating enzymes ube2l3 and ube2l6 in the form of a thioester and then directly transfers the ubiquitin to targeted substrates. The chain is Probable E3 ubiquitin-protein ligase RNF144A-A (rnf144aa) from Danio rerio (Zebrafish).